Reading from the N-terminus, the 459-residue chain is Cysteine--tRNA ligase (459 aa).

C27 contributes to the Zn(2+) binding site. Positions I29–H39 match the 'HIGH' region motif. Zn(2+) contacts are provided by C208, H233, and E237. The 'KMSKS' region signature appears at K265–S269. Residue K268 coordinates ATP.

The protein belongs to the class-I aminoacyl-tRNA synthetase family. As to quaternary structure, monomer. It depends on Zn(2+) as a cofactor.

Its subcellular location is the cytoplasm. It catalyses the reaction tRNA(Cys) + L-cysteine + ATP = L-cysteinyl-tRNA(Cys) + AMP + diphosphate. The sequence is that of Cysteine--tRNA ligase from Francisella philomiragia subsp. philomiragia (strain ATCC 25017 / CCUG 19701 / FSC 153 / O#319-036).